A 165-amino-acid chain; its full sequence is Nicotine 6-hydroxylase small subunit (165 aa).

The 2Fe-2S ferredoxin-type domain occupies 10 to 86 (VEIDVEVNGR…GRSIRTVEDL (77 aa)). [2Fe-2S] cluster-binding residues include Cys48, Cys53, Cys56, and Cys68.

In terms of assembly, heterotrimer composed of a large subunit (NdhL), a medium subunit (NdhM) and a small subunit (NdhS). [2Fe-2S] cluster serves as cofactor.

The protein resides in the cytoplasm. The catalysed reaction is (R)-nicotine + A + H2O = (R)-6-hydroxynicotine + AH2. The enzyme catalyses (S)-nicotine + A + H2O = (S)-6-hydroxynicotine + AH2. Its pathway is alkaloid degradation; nicotine degradation; 6-hydroxypseudooxynicotine from nicotine (R-isomer route): step 1/2. It functions in the pathway alkaloid degradation; nicotine degradation; 6-hydroxypseudooxynicotine from nicotine (S-isomer route): step 1/2. Its activity is regulated as follows. Nicotine dehydrogenase activity is inhibited by tungsten. In terms of biological role, component of the nicotine 6-hydroxylase, which is involved in the degradation of nicotine. Catalyzes the hydroxylation of the pyridine ring at C6 to form 6-hydroxynicotine. Can use both L-nicotine and D-nicotine. This chain is Nicotine 6-hydroxylase small subunit, found in Paenarthrobacter nicotinovorans (Arthrobacter nicotinovorans).